The following is a 382-amino-acid chain: S-adenosylmethionine synthase (382 aa).

Histidine 16 contributes to the ATP binding site. Aspartate 18 serves as a coordination point for Mg(2+). Residue glutamate 44 coordinates K(+). L-methionine is bound by residues glutamate 57 and glutamine 100. Residues 100–110 are flexible loop; that stretch reads QSADIAIGVDE. ATP is bound by residues 165 to 167, aspartate 240, 246 to 247, alanine 263, and lysine 267; these read DAK and RK. Aspartate 240 lines the L-methionine pocket. L-methionine is bound at residue lysine 271.

Belongs to the AdoMet synthase family. In terms of assembly, homotetramer; dimer of dimers. It depends on Mg(2+) as a cofactor. The cofactor is K(+).

The protein localises to the cytoplasm. It carries out the reaction L-methionine + ATP + H2O = S-adenosyl-L-methionine + phosphate + diphosphate. It participates in amino-acid biosynthesis; S-adenosyl-L-methionine biosynthesis; S-adenosyl-L-methionine from L-methionine: step 1/1. Its function is as follows. Catalyzes the formation of S-adenosylmethionine (AdoMet) from methionine and ATP. The overall synthetic reaction is composed of two sequential steps, AdoMet formation and the subsequent tripolyphosphate hydrolysis which occurs prior to release of AdoMet from the enzyme. The chain is S-adenosylmethionine synthase from Alcanivorax borkumensis (strain ATCC 700651 / DSM 11573 / NCIMB 13689 / SK2).